Consider the following 195-residue polypeptide: Peptidyl-tRNA hydrolase (195 aa).

Position 17 (Y17) interacts with tRNA. H22 (proton acceptor) is an active-site residue. TRNA is bound by residues F68, N70, and N116.

Belongs to the PTH family. Monomer.

The protein localises to the cytoplasm. It carries out the reaction an N-acyl-L-alpha-aminoacyl-tRNA + H2O = an N-acyl-L-amino acid + a tRNA + H(+). In terms of biological role, hydrolyzes ribosome-free peptidyl-tRNAs (with 1 or more amino acids incorporated), which drop off the ribosome during protein synthesis, or as a result of ribosome stalling. Its function is as follows. Catalyzes the release of premature peptidyl moieties from peptidyl-tRNA molecules trapped in stalled 50S ribosomal subunits, and thus maintains levels of free tRNAs and 50S ribosomes. In Pectobacterium carotovorum subsp. carotovorum (strain PC1), this protein is Peptidyl-tRNA hydrolase.